Consider the following 541-residue polypeptide: 2-hydroxyacylsphingosine 1-beta-galactosyltransferase (541 aa).

A signal peptide spans 1 to 20; it reads MKSYTPYFMLLWSAVGIARA. 3 N-linked (GlcNAc...) asparagine glycosylation sites follow: Asn78, Asn333, and Asn442. A helical transmembrane segment spans residues 472–492; it reads YFLLDIAFVLLLGAVLLYFIL. A disordered region spans residues 518–541; sequence HYQNGIRNGKYKGNGRVKHEKKVR. Residues 526-541 show a composition bias toward basic residues; sequence GKYKGNGRVKHEKKVR.

The protein belongs to the UDP-glycosyltransferase family.

Its subcellular location is the membrane. The protein resides in the endoplasmic reticulum. It carries out the reaction an N-acylsphing-4-enine + UDP-alpha-D-galactose = a beta-D-galactosyl-(1&lt;-&gt;1')-N-acylsphing-4-enine + UDP + H(+). The enzyme catalyses N-(2-hydroxy-hexanoyl)-sphing-4-enine + UDP-alpha-D-galactose = N-(2-hydroxy-hexanoyl)-beta-D-galactosyl-sphing-4-enine + UDP + H(+). It catalyses the reaction N-(2-hydroxy-hexanoyl)-sphinganine + UDP-alpha-D-galactose = N-(2-hydroxyhexanoyl)-beta-D-galactosylsphinganine + UDP + H(+). The catalysed reaction is an N-acyl-sphingoid base + UDP-alpha-D-galactose = a D-galactosylceramide + UDP + H(+). It participates in sphingolipid metabolism; galactosylceramide biosynthesis. Its function is as follows. Catalyzes the transfer of galactose to ceramide, a key enzymatic step in the biosynthesis of galactocerebrosides, which are abundant sphingolipids of the myelin membrane of the central nervous system and peripheral nervous system. Galactosylates both hydroxy- and non-hydroxy fatty acid-containing ceramides and diglycerides. This chain is 2-hydroxyacylsphingosine 1-beta-galactosyltransferase, found in Mus musculus (Mouse).